A 352-amino-acid chain; its full sequence is Heat-inducible transcription repressor HrcA (352 aa).

This sequence belongs to the HrcA family.

Its function is as follows. Negative regulator of class I heat shock genes (grpE-dnaK-dnaJ and groELS operons). Prevents heat-shock induction of these operons. The chain is Heat-inducible transcription repressor HrcA from Latilactobacillus sakei subsp. sakei (strain 23K) (Lactobacillus sakei subsp. sakei).